Consider the following 914-residue polypeptide: Protein translocase subunit SecA (914 aa).

Residues Gln-86, 104–108, and Asp-512 each bind ATP; that span reads GEGKT. Cys-898, Cys-900, Cys-909, and His-910 together coordinate Zn(2+).

It belongs to the SecA family. Monomer and homodimer. Part of the essential Sec protein translocation apparatus which comprises SecA, SecYEG and auxiliary proteins SecDF-YajC and YidC. The cofactor is Zn(2+).

Its subcellular location is the cell inner membrane. The protein resides in the cytoplasm. It catalyses the reaction ATP + H2O + cellular proteinSide 1 = ADP + phosphate + cellular proteinSide 2.. Its function is as follows. Part of the Sec protein translocase complex. Interacts with the SecYEG preprotein conducting channel. Has a central role in coupling the hydrolysis of ATP to the transfer of proteins into and across the cell membrane, serving both as a receptor for the preprotein-SecB complex and as an ATP-driven molecular motor driving the stepwise translocation of polypeptide chains across the membrane. This is Protein translocase subunit SecA from Bordetella petrii (strain ATCC BAA-461 / DSM 12804 / CCUG 43448).